A 446-amino-acid polypeptide reads, in one-letter code: Glutamate--tRNA ligase 2 (446 aa).

A 'HIGH' region motif is present at residues 8-18; the sequence is PSPTGYLHIGN. The 'KMSKS' region motif lies at 239 to 243; that stretch reads GLSKR. Residue K242 participates in ATP binding.

Belongs to the class-I aminoacyl-tRNA synthetase family. Glutamate--tRNA ligase type 1 subfamily. In terms of assembly, monomer.

It is found in the cytoplasm. It carries out the reaction tRNA(Glu) + L-glutamate + ATP = L-glutamyl-tRNA(Glu) + AMP + diphosphate. In terms of biological role, catalyzes the attachment of glutamate to tRNA(Glu) in a two-step reaction: glutamate is first activated by ATP to form Glu-AMP and then transferred to the acceptor end of tRNA(Glu). The protein is Glutamate--tRNA ligase 2 of Methylobacterium radiotolerans (strain ATCC 27329 / DSM 1819 / JCM 2831 / NBRC 15690 / NCIMB 10815 / 0-1).